A 97-amino-acid polypeptide reads, in one-letter code: Peptide Y (97 aa).

A signal peptide spans Met1–Ala28. Tyr64 is modified (tyrosine amide). The propeptide at Ser68–Trp97 is C-terminal extension.

The protein belongs to the NPY family.

Its subcellular location is the secreted. The chain is Peptide Y from Dicentrarchus labrax (European seabass).